The following is a 143-amino-acid chain: Actin-depolymerizing factor 2 (143 aa).

Positions 5–139 constitute an ADF-H domain; that stretch reads ASGMAVHDDC…GLDVFRSRAG (135 aa).

The protein belongs to the actin-binding proteins ADF family.

Its function is as follows. Actin-depolymerizing protein. Severs actin filaments (F-actin) and binds to actin monomers. The chain is Actin-depolymerizing factor 2 (ADF2) from Petunia hybrida (Petunia).